We begin with the raw amino-acid sequence, 151 residues long: Large ribosomal subunit protein uL13 (151 aa).

It belongs to the universal ribosomal protein uL13 family. In terms of assembly, part of the 50S ribosomal subunit.

Its function is as follows. This protein is one of the early assembly proteins of the 50S ribosomal subunit, although it is not seen to bind rRNA by itself. It is important during the early stages of 50S assembly. In Mycoplasma mycoides subsp. mycoides SC (strain CCUG 32753 / NCTC 10114 / PG1), this protein is Large ribosomal subunit protein uL13.